The primary structure comprises 291 residues: Bifunctional protein FolD (291 aa).

Residues 168–170, threonine 195, and valine 236 contribute to the NADP(+) site; that span reads GRG.

The protein belongs to the tetrahydrofolate dehydrogenase/cyclohydrolase family. In terms of assembly, homodimer.

It carries out the reaction (6R)-5,10-methylene-5,6,7,8-tetrahydrofolate + NADP(+) = (6R)-5,10-methenyltetrahydrofolate + NADPH. The catalysed reaction is (6R)-5,10-methenyltetrahydrofolate + H2O = (6R)-10-formyltetrahydrofolate + H(+). The protein operates within one-carbon metabolism; tetrahydrofolate interconversion. Functionally, catalyzes the oxidation of 5,10-methylenetetrahydrofolate to 5,10-methenyltetrahydrofolate and then the hydrolysis of 5,10-methenyltetrahydrofolate to 10-formyltetrahydrofolate. In Bifidobacterium adolescentis (strain ATCC 15703 / DSM 20083 / NCTC 11814 / E194a), this protein is Bifunctional protein FolD.